Reading from the N-terminus, the 274-residue chain is Syntaxin-12 (274 aa).

Positions 1-20 are disordered; the sequence is MSYGPLDMYRNPGPSGPQPR. S2 is subject to N-acetylserine. The Cytoplasmic portion of the chain corresponds to 2–250; sequence SYGPLDMYRN…AYYQKKSRKK (249 aa). Residues 34–80 are a coiled coil; sequence QRISQATAQIKNLMSQLGTKQDSSKLQENLQQFQHSTNQLAKETNEL. Residues 128-150 are disordered; it reads EKESIARARAGSRLSAEDRQREE. Phosphoserine occurs at positions 139, 142, 218, and 225. The t-SNARE coiled-coil homology domain occupies 178–240; that stretch reads LELIKERETA…ERASDQLQRA (63 aa). A helical; Anchor for type IV membrane protein transmembrane segment spans residues 251-271; sequence MCILVLVLSVIVTVLVVVIWV. Topologically, residues 272-274 are vesicular; the sequence is ASK.

It belongs to the syntaxin family. In terms of assembly, associates with the BLOC-1 complex. Interacts with BLOC1S6. Interacts with NAPA and SNAP23. Identified in a complex containing STX6, STX12, VAMP4 and VTI1A. Interacts with GRIPAP1. Forms a complex with GRIP1, GRIA2 and NSG1; controls the intracellular fate of AMPAR and the endosomal sorting of the GRIA2 subunit toward recycling and membrane targeting. Interacts with NSG1. Interacts with TPC1. Interacts (via N-terminus) with VPS13B. As to expression, ubiquitous. Highly expressed in brain.

The protein resides in the endosome membrane. The protein localises to the golgi apparatus membrane. Its subcellular location is the endomembrane system. It localises to the early endosome membrane. It is found in the recycling endosome membrane. In terms of biological role, SNARE promoting fusion of transport vesicles with target membranes. Together with SNARE STX6, promotes movement of vesicles from endosomes to the cell membrane, and may therefore function in the endocytic recycling pathway. Through complex formation with GRIP1, GRIA2 and NSG1 controls the intracellular fate of AMPAR and the endosomal sorting of the GRIA2 subunit toward recycling and membrane targeting. The chain is Syntaxin-12 (Stx12) from Rattus norvegicus (Rat).